The sequence spans 71 residues: Small ribosomal subunit protein bS21 (71 aa).

A compositionally biased stretch (basic residues) spans 48–59; the sequence is EKASLAKRHAKR. Residues 48–71 form a disordered region; sequence EKASLAKRHAKRNFRENARNTRLY. Residues 60–71 are compositionally biased toward basic and acidic residues; that stretch reads NFRENARNTRLY.

It belongs to the bacterial ribosomal protein bS21 family.

The chain is Small ribosomal subunit protein bS21 from Glaesserella parasuis serovar 5 (strain SH0165) (Haemophilus parasuis).